We begin with the raw amino-acid sequence, 500 residues long: Aspartyl/glutamyl-tRNA(Asn/Gln) amidotransferase subunit B (500 aa).

This sequence belongs to the GatB/GatE family. GatB subfamily. In terms of assembly, heterotrimer of A, B and C subunits.

The catalysed reaction is L-glutamyl-tRNA(Gln) + L-glutamine + ATP + H2O = L-glutaminyl-tRNA(Gln) + L-glutamate + ADP + phosphate + H(+). It catalyses the reaction L-aspartyl-tRNA(Asn) + L-glutamine + ATP + H2O = L-asparaginyl-tRNA(Asn) + L-glutamate + ADP + phosphate + 2 H(+). Its function is as follows. Allows the formation of correctly charged Asn-tRNA(Asn) or Gln-tRNA(Gln) through the transamidation of misacylated Asp-tRNA(Asn) or Glu-tRNA(Gln) in organisms which lack either or both of asparaginyl-tRNA or glutaminyl-tRNA synthetases. The reaction takes place in the presence of glutamine and ATP through an activated phospho-Asp-tRNA(Asn) or phospho-Glu-tRNA(Gln). The chain is Aspartyl/glutamyl-tRNA(Asn/Gln) amidotransferase subunit B from Brucella melitensis biotype 2 (strain ATCC 23457).